The following is a 341-amino-acid chain: L-threonine 3-dehydrogenase (341 aa).

Cysteine 38 is a binding site for Zn(2+). Active-site charge relay system residues include threonine 40 and histidine 43. The Zn(2+) site is built by histidine 63, glutamate 64, cysteine 93, cysteine 96, cysteine 99, and cysteine 107. Residues isoleucine 175, aspartate 195, arginine 200, 262-264 (LGI), and 286-287 (IY) each bind NAD(+).

It belongs to the zinc-containing alcohol dehydrogenase family. Homotetramer. Zn(2+) is required as a cofactor.

Its subcellular location is the cytoplasm. It catalyses the reaction L-threonine + NAD(+) = (2S)-2-amino-3-oxobutanoate + NADH + H(+). Its pathway is amino-acid degradation; L-threonine degradation via oxydo-reductase pathway; glycine from L-threonine: step 1/2. Functionally, catalyzes the NAD(+)-dependent oxidation of L-threonine to 2-amino-3-ketobutyrate. In Yersinia pseudotuberculosis serotype O:1b (strain IP 31758), this protein is L-threonine 3-dehydrogenase.